The sequence spans 495 residues: Ribose import ATP-binding protein RbsA (495 aa).

ABC transporter domains lie at 7–242 and 250–491; these read LEMR…VGRP and ERDI…TGVN. 39-46 is an ATP binding site; the sequence is GENGAGKS.

The protein belongs to the ABC transporter superfamily. Ribose importer (TC 3.A.1.2.1) family. In terms of assembly, the complex is composed of an ATP-binding protein (RbsA), two transmembrane proteins (RbsC) and a solute-binding protein (RbsB).

The protein localises to the cell inner membrane. The enzyme catalyses D-ribose(out) + ATP + H2O = D-ribose(in) + ADP + phosphate + H(+). Its function is as follows. Part of the ABC transporter complex RbsABC involved in ribose import. Responsible for energy coupling to the transport system. The polypeptide is Ribose import ATP-binding protein RbsA (Shigella dysenteriae serotype 1 (strain Sd197)).